The chain runs to 265 residues: 4-hydroxy-tetrahydrodipicolinate reductase (265 aa).

9-14 (GPRGRM) lines the NAD(+) pocket. NADP(+) is bound at residue arginine 37. NAD(+)-binding positions include 98-100 (GTT) and 124-127 (APNF). The active-site Proton donor/acceptor is histidine 154. Residue histidine 155 participates in (S)-2,3,4,5-tetrahydrodipicolinate binding. Catalysis depends on lysine 158, which acts as the Proton donor. A (S)-2,3,4,5-tetrahydrodipicolinate-binding site is contributed by 164–165 (GT).

Belongs to the DapB family.

The protein resides in the cytoplasm. It catalyses the reaction (S)-2,3,4,5-tetrahydrodipicolinate + NAD(+) + H2O = (2S,4S)-4-hydroxy-2,3,4,5-tetrahydrodipicolinate + NADH + H(+). It carries out the reaction (S)-2,3,4,5-tetrahydrodipicolinate + NADP(+) + H2O = (2S,4S)-4-hydroxy-2,3,4,5-tetrahydrodipicolinate + NADPH + H(+). Its pathway is amino-acid biosynthesis; L-lysine biosynthesis via DAP pathway; (S)-tetrahydrodipicolinate from L-aspartate: step 4/4. Functionally, catalyzes the conversion of 4-hydroxy-tetrahydrodipicolinate (HTPA) to tetrahydrodipicolinate. This Geobacillus kaustophilus (strain HTA426) protein is 4-hydroxy-tetrahydrodipicolinate reductase.